Here is a 452-residue protein sequence, read N- to C-terminus: Pup--protein ligase (452 aa).

E9 provides a ligand contact to Mg(2+). Position 53 (R53) interacts with ATP. Position 55 (Y55) interacts with Mg(2+). The active-site Proton acceptor is D57. E63 contacts Mg(2+). Residues T66 and W419 each coordinate ATP.

Belongs to the Pup ligase/Pup deamidase family. Pup-conjugating enzyme subfamily.

It catalyses the reaction ATP + [prokaryotic ubiquitin-like protein]-L-glutamate + [protein]-L-lysine = ADP + phosphate + N(6)-([prokaryotic ubiquitin-like protein]-gamma-L-glutamyl)-[protein]-L-lysine.. It participates in protein degradation; proteasomal Pup-dependent pathway. It functions in the pathway protein modification; protein pupylation. In terms of biological role, catalyzes the covalent attachment of the prokaryotic ubiquitin-like protein modifier Pup to the proteasomal substrate proteins, thereby targeting them for proteasomal degradation. This tagging system is termed pupylation. The ligation reaction involves the side-chain carboxylate of the C-terminal glutamate of Pup and the side-chain amino group of a substrate lysine. This is Pup--protein ligase from Gordonia bronchialis (strain ATCC 25592 / DSM 43247 / BCRC 13721 / JCM 3198 / KCTC 3076 / NBRC 16047 / NCTC 10667) (Rhodococcus bronchialis).